Reading from the N-terminus, the 270-residue chain is Imidazole glycerol phosphate synthase subunit HisF (270 aa).

Active-site residues include D11 and D130.

This sequence belongs to the HisA/HisF family. In terms of assembly, heterodimer of HisH and HisF.

It is found in the cytoplasm. It carries out the reaction 5-[(5-phospho-1-deoxy-D-ribulos-1-ylimino)methylamino]-1-(5-phospho-beta-D-ribosyl)imidazole-4-carboxamide + L-glutamine = D-erythro-1-(imidazol-4-yl)glycerol 3-phosphate + 5-amino-1-(5-phospho-beta-D-ribosyl)imidazole-4-carboxamide + L-glutamate + H(+). Its pathway is amino-acid biosynthesis; L-histidine biosynthesis; L-histidine from 5-phospho-alpha-D-ribose 1-diphosphate: step 5/9. Its function is as follows. IGPS catalyzes the conversion of PRFAR and glutamine to IGP, AICAR and glutamate. The HisF subunit catalyzes the cyclization activity that produces IGP and AICAR from PRFAR using the ammonia provided by the HisH subunit. The sequence is that of Imidazole glycerol phosphate synthase subunit HisF from Chloroflexus aggregans (strain MD-66 / DSM 9485).